Here is a 149-residue protein sequence, read N- to C-terminus: Large ribosomal subunit protein bL9 (149 aa).

The protein belongs to the bacterial ribosomal protein bL9 family.

Its function is as follows. Binds to the 23S rRNA. This chain is Large ribosomal subunit protein bL9, found in Fusobacterium nucleatum subsp. nucleatum (strain ATCC 25586 / DSM 15643 / BCRC 10681 / CIP 101130 / JCM 8532 / KCTC 2640 / LMG 13131 / VPI 4355).